We begin with the raw amino-acid sequence, 84 residues long: Small ribosomal subunit protein bS16 (84 aa).

This sequence belongs to the bacterial ribosomal protein bS16 family.

This Dichelobacter nodosus (strain VCS1703A) protein is Small ribosomal subunit protein bS16.